We begin with the raw amino-acid sequence, 381 residues long: Chaperone protein DnaJ (381 aa).

Residues 5 to 70 (DFYEVLGVGR…QKKAAYDQYG (66 aa)) enclose the J domain. The CR-type zinc-finger motif lies at 136–214 (GVSKEIEVPT…CHGQGRKQKT (79 aa)). Zn(2+)-binding residues include Cys149, Cys152, Cys166, Cys169, Cys188, Cys191, Cys202, and Cys205. CXXCXGXG motif repeat units follow at residues 149 to 156 (CDTCDGSG), 166 to 173 (CGTCHGHG), 188 to 195 (CPTCHGKG), and 202 to 209 (CNECHGQG).

The protein belongs to the DnaJ family. As to quaternary structure, homodimer. Zn(2+) is required as a cofactor.

It is found in the cytoplasm. In terms of biological role, participates actively in the response to hyperosmotic and heat shock by preventing the aggregation of stress-denatured proteins and by disaggregating proteins, also in an autonomous, DnaK-independent fashion. Unfolded proteins bind initially to DnaJ; upon interaction with the DnaJ-bound protein, DnaK hydrolyzes its bound ATP, resulting in the formation of a stable complex. GrpE releases ADP from DnaK; ATP binding to DnaK triggers the release of the substrate protein, thus completing the reaction cycle. Several rounds of ATP-dependent interactions between DnaJ, DnaK and GrpE are required for fully efficient folding. Also involved, together with DnaK and GrpE, in the DNA replication of plasmids through activation of initiation proteins. The polypeptide is Chaperone protein DnaJ (Vibrio campbellii (strain ATCC BAA-1116)).